A 190-amino-acid chain; its full sequence is UPF0725 protein At2g20625 (190 aa).

It belongs to the UPF0725 (EMB2204) family.

The polypeptide is UPF0725 protein At2g20625 (Arabidopsis thaliana (Mouse-ear cress)).